We begin with the raw amino-acid sequence, 414 residues long: Histidine--tRNA ligase (414 aa).

The protein belongs to the class-II aminoacyl-tRNA synthetase family. As to quaternary structure, homodimer.

It localises to the cytoplasm. It carries out the reaction tRNA(His) + L-histidine + ATP = L-histidyl-tRNA(His) + AMP + diphosphate + H(+). The chain is Histidine--tRNA ligase from Rickettsia rickettsii (strain Iowa).